Consider the following 611-residue polypeptide: UvrABC system protein C (611 aa).

Positions 14-91 (TSPGCYIHKD…IKENKPKYNI (78 aa)) constitute a GIY-YIG domain. Residues 196–231 (DQIIEDLRGKMAGAAQTMEFEKAAEYRDLIQSIGTL) form the UVR domain.

Belongs to the UvrC family. Interacts with UvrB in an incision complex.

The protein localises to the cytoplasm. In terms of biological role, the UvrABC repair system catalyzes the recognition and processing of DNA lesions. UvrC both incises the 5' and 3' sides of the lesion. The N-terminal half is responsible for the 3' incision and the C-terminal half is responsible for the 5' incision. This is UvrABC system protein C from Streptococcus gordonii (strain Challis / ATCC 35105 / BCRC 15272 / CH1 / DL1 / V288).